The sequence spans 331 residues: Quinone oxidoreductase (331 aa).

The residue at position 2 (Ala-2) is an N-acetylalanine. Lys-23 bears the N6-acetyllysine mark. Ser-35 carries the phosphoserine modification. Residues Tyr-53, 158 to 161 (SGGV), and Gly-181 contribute to the NADP(+) site. Lys-186 is subject to N6-acetyllysine. Residues His-200, Asn-231, 248-251 (VGCR), and 271-273 (VSL) each bind NADP(+). Lys-298 carries the post-translational modification N6-succinyllysine.

This sequence belongs to the zinc-containing alcohol dehydrogenase family. Quinone oxidoreductase subfamily. Homotetramer.

It localises to the cytoplasm. It catalyses the reaction 2 a quinone + NADPH + H(+) = 2 a 1,4-benzosemiquinone + NADP(+). Its function is as follows. Does not have alcohol dehydrogenase activity. Binds NADP and acts through a one-electron transfer process. Orthoquinones, such as 1,2-naphthoquinone or 9,10-phenanthrenequinone, are the best substrates (in vitro). May act in the detoxification of xenobiotics. Interacts with (AU)-rich elements (ARE) in the 3'-UTR of target mRNA species and enhances their stability. NADPH binding interferes with mRNA binding. This Mus musculus (Mouse) protein is Quinone oxidoreductase (Cryz).